The following is an 84-amino-acid chain: Beta-defensin 119 (84 aa).

The N-terminal stretch at 1-21 (MKFLFLFLAILLATEVPVISG) is a signal peptide. 3 cysteine pairs are disulfide-bonded: C28/C55, C35/C49, and C39/C56.

Belongs to the beta-defensin family. In terms of tissue distribution, abundant expression in the male reproductive tract only. Expressed abundantly in testis, while expression in epididymis decreased gradually from caput to cauda.

The protein localises to the secreted. Has antibacterial activity. This is Beta-defensin 119 (DEFB119) from Macaca mulatta (Rhesus macaque).